We begin with the raw amino-acid sequence, 1004 residues long: Putative helicase MOV-10 (1004 aa).

At lysine 148 the chain carries N6-acetyllysine. The residue at position 254 (threonine 254) is a Phosphothreonine. Position 433 is a phosphoserine (serine 433). An ATP-binding site is contributed by 525 to 532 (GPPGTGKT). Positions 646 to 649 (DEAG) match the DEAG box motif. Residues 922-966 (NPLLLGHDPDWKTFLEFCKENGGYTGCPFPAKLDLQQGQDLLQGL) form an interaction with AGO2 and APOBEC3G region. Positions 966–1004 (LSKLSPSTSGPRRHQNLPQEREGEGGLPLQVEPEWRNEL) are disordered. Serine 970 bears the Phosphoserine mark.

Belongs to the DNA2/NAM7 helicase family. SDE3 subfamily. Interacts with DICER1, AGO2, TARBP2, EIF6 and RPL7A (60S ribosome subunit); they form a large RNA-induced silencing complex (RISC). Interacts with APOBEC3G in an RNA-dependent manner. Interacts with TRIM71 (via NHL repeats) in an RNA-dependent manner. Interacts with both protein products of LIRE1, ORF1p and ORF2p. Interacts with TUT4 and, to a lesser extent, TUT7; the interactions are RNA-dependent. Interacts with AGO2, TNRC6B and UPF1; the interactions are direct and RNA-dependent. Interacts with FMR1; this interaction is direct, occurs in an RNA-dependent manner on polysomes and induces association of MOV10 with RNAs. Interacts with SHFL; the interaction increases in presence of RNA. Interacts with DHX34; the interaction is RNA-independent. Interacts with RBM46. Post-translationally, ubiquitinated by the DCX(DCAF12) complex that specifically recognizes the glutamate-leucine (Glu-Leu) degron at the C-terminus, leading to its degradation.

The protein resides in the cytoplasm. Its subcellular location is the P-body. It is found in the nucleus. The protein localises to the cytoplasmic ribonucleoprotein granule. It localises to the stress granule. It catalyses the reaction ATP + H2O = ADP + phosphate + H(+). In terms of biological role, 5' to 3' RNA helicase that is involved in a number of cellular roles ranging from mRNA metabolism and translation, modulation of viral infectivity, inhibition of retrotransposition, or regulation of synaptic transmission. Plays an important role in innate antiviral immunity by promoting type I interferon production. Mechanistically, specifically uses IKKepsilon/IKBKE as the mediator kinase for IRF3 activation. Contributes to UPF1 mRNA target degradation by translocation along 3' UTRs. Required for microRNA (miRNA)-mediated gene silencing by the RNA-induced silencing complex (RISC). Required for both miRNA-mediated translational repression and miRNA-mediated cleavage of complementary mRNAs by RISC. In cooperation with FMR1, regulates miRNA-mediated translational repression by AGO2. Restricts retrotransposition of long interspersed element-1 (LINE-1) in cooperation with TUT4 and TUT7 counteracting the RNA chaperonne activity of L1RE1. Facilitates LINE-1 uridylation by TUT4 and TUT7. Required for embryonic viability and for normal central nervous system development and function. Plays two critical roles in early brain development: suppresses retroelements in the nucleus by directly inhibiting cDNA synthesis, while regulates cytoskeletal mRNAs to influence neurite outgrowth in the cytosol. May function as a messenger ribonucleoprotein (mRNP) clearance factor. This chain is Putative helicase MOV-10 (Mov10), found in Mus musculus (Mouse).